The sequence spans 262 residues: VPS74-like protein DDB_G0288371 (262 aa).

It belongs to the GOLPH3/VPS74 family.

The protein localises to the golgi apparatus. The protein resides in the golgi stack membrane. In terms of biological role, phosphatidylinositol-4-phosphate-binding protein that links Golgi membranes to the cytoskeleton and may participate in the tensile force required for vesicle budding from the Golgi. Thereby, may play a role in Golgi membrane trafficking. May also bind to the coatomer to regulate Golgi membrane trafficking. May play a role in anterograde transport from the Golgi to the plasma membrane and regulate secretion. May be involved in vacuolar protein sorting. In Dictyostelium discoideum (Social amoeba), this protein is VPS74-like protein DDB_G0288371.